The sequence spans 248 residues: MAGHSKWANIKHRKERQDAKRGKIFTKWIRELTVAARQGGGDPNSNPRLRLALDKALGANMSRDIIDRAIARGTGAAGSDDVVELTYEGYGPNGVAVMVECMTDNRNRTAAAVRHAFSKCGGNLGTDGSVAYLFERKGQITFAEGVDEDALMEAAMEADADDVVSNEDGSIDVFTSFAGFYGVRNALEAAGFTAADAEIVMLPTTSAELDLEGAEKVLKLIDMLEDLDDVQNVYSNADIPESVAEQLG.

This sequence belongs to the TACO1 family.

It localises to the cytoplasm. The chain is Probable transcriptional regulatory protein PFL_4766 from Pseudomonas fluorescens (strain ATCC BAA-477 / NRRL B-23932 / Pf-5).